The following is a 385-amino-acid chain: tRNA N6-adenosine threonylcarbamoyltransferase (385 aa).

The a divalent metal cation site is built by His-140, His-144, and Tyr-161. Substrate-binding positions include Tyr-161 to Gly-165, Asp-193, Gly-208, Glu-212, and Asn-314. An a divalent metal cation-binding site is contributed by Asp-343.

This sequence belongs to the KAE1 / TsaD family. In terms of assembly, component of the EKC/KEOPS complex composed of at least BUD32, CGI121, GON7, KAE1 and PCC1; the whole complex dimerizes. A divalent metal cation serves as cofactor.

The protein resides in the cytoplasm. It localises to the nucleus. The enzyme catalyses L-threonylcarbamoyladenylate + adenosine(37) in tRNA = N(6)-L-threonylcarbamoyladenosine(37) in tRNA + AMP + H(+). In terms of biological role, component of the EKC/KEOPS complex that is required for the formation of a threonylcarbamoyl group on adenosine at position 37 (t(6)A37) in tRNAs that read codons beginning with adenine. The complex is probably involved in the transfer of the threonylcarbamoyl moiety of threonylcarbamoyl-AMP (TC-AMP) to the N6 group of A37. KAE1 likely plays a direct catalytic role in this reaction, but requires other protein(s) of the complex to fulfill this activity. The EKC/KEOPS complex also promotes both telomere uncapping and telomere elongation. The complex is required for efficient recruitment of transcriptional coactivators. This Eremothecium gossypii (strain ATCC 10895 / CBS 109.51 / FGSC 9923 / NRRL Y-1056) (Yeast) protein is tRNA N6-adenosine threonylcarbamoyltransferase.